A 533-amino-acid chain; its full sequence is (E)-beta-farnesene synthase (533 aa).

Mg(2+)-binding residues include Asp-286, Asp-290, Asn-430, Ser-434, and Glu-438. The short motif at 286-290 is the DDXXD motif element; the sequence is DDMMD.

Belongs to the terpene synthase family. Mg(2+) is required as a cofactor. The cofactor is Co(2+). Requires Mn(2+) as cofactor.

It localises to the cytoplasm. The catalysed reaction is (2E,6E)-farnesyl diphosphate = (E)-beta-farnesene + diphosphate. It participates in secondary metabolite biosynthesis; terpenoid biosynthesis. Sesquiterpene cyclase catalyzing the production of beta-farnesene and alpha-bergamotene in equal amounts from farnesyl diphosphate. Involved in indirect defense by producing volatile signals attracting natural enemies of herbivores. This is (E)-beta-farnesene synthase from Zea mays subsp. huehuetenangensis (San Antonio Huista teosinte).